Reading from the N-terminus, the 415-residue chain is MKLKSLLLRYYPPGIMLEYEKGGELKTKSIDLLELSPSTDVNTLVGEIQKVEPLITASRTKQVRLLVQRLQEKLRQHCDHNFYLFKVLRAHILPLTNVALNKAGSCFITGSYDRTCKVWDTASGEELHTLEGHRNVVYAIAFNNPYGDKIATGSFDKTCKLWSAETGKCYHTFRGHTAEIVCLSFNPQSTVVATGSMDTTAKLWDIQSGEEVVTLTGHLAEIISLSFDTSGDRIITGSFDHTVVVWDASTGRKVHTLIGHCAEISSALFSWDCSLILTGSMDKTCMLWDATSGKCVATLTGHDDEILDSCFDYTGKLIATASADGTARVYNATTRKCITKLEGHEGEISKISFNPQGNRLLTGSSDKTARIWDVQTGQCLQVLEGHTDEIFSCAFNYKGNIVITGSKDNSCRIWR.

WD repeat units follow at residues 90–129 (AHIL…ELHT), 132–174 (GHRN…HTFR), 175–214 (GHTA…EVVT), 217–256 (GHLA…KVHT), 259–298 (GHCA…CVAT), 301–340 (GHDD…CITK), 343–384 (GHEG…QVLE), and 386–415 (HTDE…RIWR).

This sequence belongs to the WD repeat WDR69 family. Interacts with IFT46.

Its subcellular location is the cytoplasm. The protein resides in the cytoskeleton. It is found in the flagellum basal body. The protein localises to the flagellum axoneme. Its function is as follows. Required for axonemal dynein assembly and ciliary motility in ciliated organs, including Kupffer's vesicle, during embryogenesis. Facilitates the onset of robust cilia motility during development. This Rattus norvegicus (Rat) protein is Dynein assembly factor with WD repeat domains 1 (Daw1).